We begin with the raw amino-acid sequence, 235 residues long: Ubiquinone/menaquinone biosynthesis C-methyltransferase UbiE (235 aa).

T59, D84, and S123 together coordinate S-adenosyl-L-methionine.

It belongs to the class I-like SAM-binding methyltransferase superfamily. MenG/UbiE family.

The enzyme catalyses a 2-demethylmenaquinol + S-adenosyl-L-methionine = a menaquinol + S-adenosyl-L-homocysteine + H(+). The catalysed reaction is a 2-methoxy-6-(all-trans-polyprenyl)benzene-1,4-diol + S-adenosyl-L-methionine = a 5-methoxy-2-methyl-3-(all-trans-polyprenyl)benzene-1,4-diol + S-adenosyl-L-homocysteine + H(+). Its pathway is quinol/quinone metabolism; menaquinone biosynthesis; menaquinol from 1,4-dihydroxy-2-naphthoate: step 2/2. The protein operates within cofactor biosynthesis; ubiquinone biosynthesis. Its function is as follows. Methyltransferase required for the conversion of demethylmenaquinol (DMKH2) to menaquinol (MKH2) and the conversion of 2-polyprenyl-6-methoxy-1,4-benzoquinol (DDMQH2) to 2-polyprenyl-3-methyl-6-methoxy-1,4-benzoquinol (DMQH2). The protein is Ubiquinone/menaquinone biosynthesis C-methyltransferase UbiE of Campylobacter jejuni subsp. jejuni serotype O:6 (strain 81116 / NCTC 11828).